The primary structure comprises 299 residues: Probable plastid-lipid-associated protein 13, chloroplastic (299 aa).

The N-terminal 48 residues, 1–48 (MALIHGSVPGTSAVRLVFSTSASPSRFCLNVPVVKQGWKNSCRRRVLR), are a transit peptide targeting the chloroplast. At Ala2 the chain carries N-acetylvaline.

It belongs to the PAP/fibrillin family.

It localises to the plastid. The protein resides in the chloroplast. The protein localises to the plastoglobule. This chain is Probable plastid-lipid-associated protein 13, chloroplastic (PAP13), found in Arabidopsis thaliana (Mouse-ear cress).